The chain runs to 78 residues: Large ribosomal subunit protein bL28 (78 aa).

Belongs to the bacterial ribosomal protein bL28 family.

The protein is Large ribosomal subunit protein bL28 of Thermosynechococcus vestitus (strain NIES-2133 / IAM M-273 / BP-1).